We begin with the raw amino-acid sequence, 518 residues long: Efflux pump terJ (518 aa).

Residues I43–V63 traverse the membrane as a helical segment. N79 is a glycosylation site (N-linked (GlcNAc...) asparagine). The next 12 membrane-spanning stretches (helical) occupy residues Q82–G102, L112–E132, G135–P155, A177–A197, W204–V224, I244–A264, P272–E292, F311–W331, G339–A359, G364–C384, W400–A420, and S439–V459. N-linked (GlcNAc...) asparagine glycosylation is present at N466. The helical transmembrane segment at A477–L497 threads the bilayer.

Belongs to the major facilitator superfamily.

It localises to the cell membrane. Functionally, efflux pump that might be required for efficient secretion of terrein or other secondary metabolies produced by the terrein genne cluster. The polypeptide is Efflux pump terJ (Aspergillus terreus (strain NIH 2624 / FGSC A1156)).